We begin with the raw amino-acid sequence, 468 residues long: Probable ubiquitin carboxyl-terminal hydrolase R319 (468 aa).

One can recognise a USP domain in the interval 42–462 (TGIMNLGNTC…NAYILFYIRS (421 aa)). The active-site Nucleophile is the C51. H420 (proton acceptor) is an active-site residue.

Belongs to the peptidase C19 family.

It catalyses the reaction Thiol-dependent hydrolysis of ester, thioester, amide, peptide and isopeptide bonds formed by the C-terminal Gly of ubiquitin (a 76-residue protein attached to proteins as an intracellular targeting signal).. The sequence is that of Probable ubiquitin carboxyl-terminal hydrolase R319 from Acanthamoeba polyphaga (Amoeba).